Here is a 252-residue protein sequence, read N- to C-terminus: MTEVDLNSDMGEGFGPWTIGDGVDAAIMPLISSANIATGFHAGDPSSMRRTVEMAAEHGVAIGAHPGFRDLVGFGRRHIAAPAIELVNDMLYQLGALREFARLQGLSLQHVKPHGALYMHLARDEVAARLFVETLQRLEPELLLYCMPGSATWRIGRELGQPLVREFYADRDYDRSGSIVFTRRVAALDPQQVADKVLRACREGKVRTVEGEDLDIAFDSVCIHSDTPGALELVASTRARLEGAGIRIKAPR.

It belongs to the LamB/PxpA family. In terms of assembly, forms a complex composed of PxpA, PxpB and PxpC.

The catalysed reaction is 5-oxo-L-proline + ATP + 2 H2O = L-glutamate + ADP + phosphate + H(+). Its function is as follows. Catalyzes the cleavage of 5-oxoproline to form L-glutamate coupled to the hydrolysis of ATP to ADP and inorganic phosphate. The polypeptide is 5-oxoprolinase subunit A 1 (Pseudomonas aeruginosa (strain ATCC 15692 / DSM 22644 / CIP 104116 / JCM 14847 / LMG 12228 / 1C / PRS 101 / PAO1)).